The sequence spans 68 residues: Large ribosomal subunit protein bL33c (68 aa).

Belongs to the bacterial ribosomal protein bL33 family.

It localises to the plastid. The protein localises to the chloroplast. The sequence is that of Large ribosomal subunit protein bL33c from Lactuca sativa (Garden lettuce).